The following is a 182-amino-acid chain: ADP-ribosylation factor 1 (182 aa).

Residue Gly-2 is the site of N-myristoyl glycine attachment. Residues 24–31, 67–71, and 126–129 contribute to the GTP site; these read GLDNAGKT, DLGGQ, and NKQD.

Belongs to the small GTPase superfamily. Arf family.

It localises to the golgi apparatus. The enzyme catalyses GTP + H2O = GDP + phosphate + H(+). GTP-binding protein involved in protein trafficking; may modulate vesicle budding and uncoating within the Golgi apparatus. This Brassica rapa subsp. pekinensis (Chinese cabbage) protein is ADP-ribosylation factor 1 (ARF1).